A 418-amino-acid polypeptide reads, in one-letter code: Hydroxysqualene dehydroxylase (418 aa).

It belongs to the HpnE family.

It catalyses the reaction squalene + FAD + H2O + H(+) = hydroxysqualene + FADH2. It participates in secondary metabolite biosynthesis; hopanoid biosynthesis. Functionally, involved in the biosynthesis of the hopanoid precursor squalene (SQ) from farnesyl diphosphate (FPP). Catalyzes the third (last) step, the reduction of hydroxysqualene (HSQ) to SQ. This chain is Hydroxysqualene dehydroxylase, found in Rhodopseudomonas palustris (strain ATCC BAA-98 / CGA009).